Consider the following 332-residue polypeptide: Fructose-1,6-bisphosphatase class 1 (332 aa).

The Mg(2+) site is built by Glu89, Asp110, Leu112, and Asp113. Substrate contacts are provided by residues Asp113–Ser116, Asn206, Tyr239, Tyr257–Tyr259, and Lys269. Position 275 (Glu275) interacts with Mg(2+).

This sequence belongs to the FBPase class 1 family. Homotetramer. Mg(2+) is required as a cofactor.

It is found in the cytoplasm. It carries out the reaction beta-D-fructose 1,6-bisphosphate + H2O = beta-D-fructose 6-phosphate + phosphate. The protein operates within carbohydrate biosynthesis; gluconeogenesis. The sequence is that of Fructose-1,6-bisphosphatase class 1 from Escherichia coli (strain ATCC 8739 / DSM 1576 / NBRC 3972 / NCIMB 8545 / WDCM 00012 / Crooks).